A 502-amino-acid polypeptide reads, in one-letter code: Cysteine protease RavZ (502 aa).

2 short sequence motifs (LIR) span residues 9 to 23 and 23 to 37; these read DKLI…GEQE and ESDI…GDEK. Positions 49-325 are catalytic region; that stretch reads SIYPPETSWE…ESALTEGKTL (277 aa). Catalysis depends on residues histidine 176 and aspartate 197. An alpha-3 helix region spans residues 211-217; it reads YFKGKYR. Cysteine 258 is an active-site residue. Residues 326 to 431 form a membrane targeting region region; the sequence is PVQLSEFIVA…VLPCVKFDDT (106 aa). The short motif at 429 to 443 is the LIR 3 element; sequence DDTIDDFVTIEKDEL.

The protein resides in the secreted. It localises to the host cytoplasmic vesicle membrane. It carries out the reaction [protein]-C-terminal L-amino acid-glycyl-phosphatidylethanolamide + H2O = a 1,2-diacyl-sn-glycero-3-phosphoethanolamine-N-glycine + [protein]-C-terminal &lt;stereo&gt;L-&lt;/stereo&gt;amino acid. The catalysed reaction is [protein]-C-terminal L-amino acid-glycyl-phosphatidylserine + H2O = 1,2-diacyl-sn-glycero-3-phospho-L-serine-N-glycine + [protein]-C-terminal &lt;stereo&gt;L-&lt;/stereo&gt;amino acid. In terms of biological role, cysteine protease effector that inhibits host cell autophagy by targeting lipid-conjugated ATG8 family proteins on pre-autophagosomal structures. Specifically hydrolyzes the amide bond between the C-terminal glycine residue and an adjacent aromatic residue in ATG8 proteins conjugated to phosphatidylethanolamine (PE), producing an ATG8 protein that cannot be reconjugated by host ATG7 and ATG3. Mechanistically, Ravz interacts with ATG8 proteins conjugated to PE via its LIR motifs, extracts them from the membrane of autophagosomes and integrates the PE part into its own lipid-binding site. It then removes the lipid component of the ATG8 protein. Also able to mediate delipidation of ATG8 proteins conjugated to phosphatidylserine (PS) during non-canonical autophagy. Inhibits host ubiquitin recruitment to bacteria-containing vacuoles, suggesting that it is able to mediate delipidation of other proteins in addition to ATG8 proteins. It is however not involved in the exclusion of autophagy adapters from bacteria-containing vacuoles decorated with ubiquitin. This chain is Cysteine protease RavZ, found in Legionella pneumophila subsp. pneumophila (strain Philadelphia 1 / ATCC 33152 / DSM 7513).